The following is a 676-amino-acid chain: RNA helicase NPH-II (676 aa).

One can recognise a Helicase ATP-binding domain in the interval 172–347 (FSAWISHRPV…VFLPNPAFIH (176 aa)). Residue 185–192 (GGTGVGKT) coordinates ATP. Residues 296–299 (DEVH) carry the DEXH box motif. One can recognise a Helicase C-terminal domain in the interval 366 to 542 (NPSSRMAYIE…KFNLTLPEDL (177 aa)).

It belongs to the DEAD box helicase family. DEAH subfamily. In terms of assembly, monomer.

It is found in the virion. It carries out the reaction ATP + H2O = ADP + phosphate + H(+). NTP-dependent helicase that catalyzes unidirectional unwinding of 3'tailed duplex RNAs and plays an important role during transcription of early mRNAs, presumably by preventing R-loop formation behind the elongating RNA polymerase. Might also play a role in the export of newly synthesized mRNA chains out of the core into the cytoplasm. Required for replication and propagation of viral particles. The sequence is that of RNA helicase NPH-II (OPG084) from Homo sapiens (Human).